The primary structure comprises 631 residues: MSPNMSLTASHPQQPQPTPQSKAQLTRQACNRCHASKLKCLRPPGVTTSKSCIRCIKADTECVYDPPQRFGRPRQKSRPQPESVPPRIEAREPEVTDPRRARHGSTIGARWESSERESNGSLAPSSAAESPYTAAESPDNRSSAAVAAAPLVGMDYASSHFPEPLESERTSELLDAFQSESMQLDVDSYWGETDPVMPPAATVPYSDLLTGPIDLDFTVSDQDDRAKIPKHALDPALSGADTGSTADDYVLDLVQLQASVNQNNRELAAMIRKAQSALGMSDGRVGQALPIPDSQFKTHLQRNLKASEQTLDVLHRINSQFAPVSRETRPPSRSYGLDPTLDRLYADCVSQDHAFGVGGDELGVRATTPPGVSAADPQHSILAFLVLTTYLRLLHNFDALISILQDRLRCSASLDPRRPLHLSEDISASDSSSNPLLDVSLGSFSFSSSSARSLQAMLNVQMINTVLTKIKSSTQRMLLGPDYLPPSSCSSSASTSSTASTTSCSTRAPPSSATGGAHHPATAGSIFFHHAHSHSHSSSDHLFSQPEGRGYAPYNHAFHPPPPSRHTHNYPTPETITPPSSVLGGVSGTTPPPFVSGVDHVVRRALTEVQELELSLRNRARAIQQWSEEGF.

Residues 1 to 11 show a composition bias toward polar residues; the sequence is MSPNMSLTASH. Residues 1 to 28 form a disordered region; that stretch reads MSPNMSLTASHPQQPQPTPQSKAQLTRQ. A DNA-binding region (zn(2)-C6 fungal-type) is located at residues 30 to 62; that stretch reads CNRCHASKLKCLRPPGVTTSKSCIRCIKADTEC. Disordered stretches follow at residues 64–141, 489–522, and 536–573; these read YDPP…PDNR, CSSSASTSSTASTTSCSTRAPPSSATGGAHHPAT, and HSSSDHLFSQPEGRGYAPYNHAFHPPPPSRHTHNYPTP. The span at 88-99 shows a compositional bias: basic and acidic residues; it reads IEAREPEVTDPR. The span at 119–128 shows a compositional bias: polar residues; sequence NGSLAPSSAA.

The protein resides in the nucleus. Its function is as follows. Transcription factor that positively regulates the expression of the cluster that mediates the biosynthesis of acurin A, a highly reduced polyketide coupled to a serine via a peptide bond. This is Acurin A biosynthesis cluster transcription regulator from Aspergillus aculeatus (strain ATCC 16872 / CBS 172.66 / WB 5094).